The chain runs to 333 residues: Pantothenate synthetase (333 aa).

An ATP-binding site is contributed by 27–34 (MGALHEGH). The Proton donor role is filled by His-34. Residue Gln-61 coordinates (R)-pantoate. Gln-61 serves as a coordination point for beta-alanine. 148–151 (GQKD) is an ATP binding site. Gln-154 is a (R)-pantoate binding site. ATP is bound by residues Val-177 and 185 to 188 (LSSR).

Belongs to the pantothenate synthetase family. In terms of assembly, homodimer.

The protein resides in the cytoplasm. The enzyme catalyses (R)-pantoate + beta-alanine + ATP = (R)-pantothenate + AMP + diphosphate + H(+). It participates in cofactor biosynthesis; (R)-pantothenate biosynthesis; (R)-pantothenate from (R)-pantoate and beta-alanine: step 1/1. Its function is as follows. Catalyzes the condensation of pantoate with beta-alanine in an ATP-dependent reaction via a pantoyl-adenylate intermediate. The protein is Pantothenate synthetase of Streptomyces avermitilis (strain ATCC 31267 / DSM 46492 / JCM 5070 / NBRC 14893 / NCIMB 12804 / NRRL 8165 / MA-4680).